A 716-amino-acid chain; its full sequence is Lamin-like protein (716 aa).

Composition is skewed to basic residues over residues 1-10 (MDMSKKKSKR) and 35-45 (KKTKTTTKKKA). A disordered region spans residues 1-107 (MDMSKKKSKR…TIQSIPTTPI (107 aa)). The span at 62 to 107 (ITTTTTSTSTTNNNNITTTSTSSQQSNGTLSSSSSPTIQSIPTTPI) shows a compositional bias: low complexity. Residues 130–450 (LREKDELSLI…KMRKQMADLK (321 aa)) adopt a coiled-coil conformation. The IF rod domain maps to 132–515 (EKDELSLIHN…ELVKGFEKTV (384 aa)). The short motif at 519-522 (KRKR) is the Nuclear localization signal element. Residues 519–584 (KRKRSKLQHE…PTGPEQSELF (66 aa)) form a disordered region. Positions 532-545 (AANQDQNGMTIEEQ) are enriched in polar residues. Low complexity predominate over residues 546–564 (SSTSTTTTTSATGSSSSTS). Polar residues predominate over residues 565–584 (HLDNIDSSKLPTGPEQSELF). In terms of domain architecture, LTD spans 575 to 698 (PTGPEQSELF…EETTTVTLPA (124 aa)). Positions 713 to 716 (CLIM) match the CAAX motif motif.

This sequence belongs to the intermediate filament family. Homodimer. Lamin dimers then assemble into dimeric head-to-tail polymers. Ultimately, two head-to-tail polymers assemble laterally into a protofilament with a uniformly shaped rod of 3.5 nm in diameter.

Its subcellular location is the nucleus lamina. The protein resides in the nucleus envelope. It is found in the nucleus inner membrane. In terms of biological role, lamins are intermediate filament proteins that assemble into a filamentous meshwork, and which constitute the major components of the nuclear lamina, a fibrous layer on the nucleoplasmic side of the inner nuclear membrane. Lamins provide a framework for the nuclear envelope, bridging the nuclear envelope and chromatin, thereby playing an important role in nuclear assembly, chromatin organization, nuclear membrane and telomere dynamics. The structural integrity of the lamina is strictly controlled by the cell cycle, as seen by the disintegration and formation of the nuclear envelope in prophase and telophase, respectively. Helps to maintain integrity of nuclear structures in response to mechanical stress. The sequence is that of Lamin-like protein from Dictyostelium discoideum (Social amoeba).